We begin with the raw amino-acid sequence, 104 residues long: Large ribosomal subunit protein uL24 (104 aa).

This sequence belongs to the universal ribosomal protein uL24 family. As to quaternary structure, part of the 50S ribosomal subunit.

Its function is as follows. One of two assembly initiator proteins, it binds directly to the 5'-end of the 23S rRNA, where it nucleates assembly of the 50S subunit. In terms of biological role, one of the proteins that surrounds the polypeptide exit tunnel on the outside of the subunit. This is Large ribosomal subunit protein uL24 from Shewanella piezotolerans (strain WP3 / JCM 13877).